Here is a 279-residue protein sequence, read N- to C-terminus: Thymidylate synthase (279 aa).

133-134 (RR) serves as a coordination point for dUMP. Catalysis depends on Cys-154, which acts as the Nucleophile. DUMP-binding positions include 178 to 181 (RSND), Asn-189, and 219 to 221 (HIY). Asp-181 is a (6R)-5,10-methylene-5,6,7,8-tetrahydrofolate binding site. Ala-278 provides a ligand contact to (6R)-5,10-methylene-5,6,7,8-tetrahydrofolate.

This sequence belongs to the thymidylate synthase family. Bacterial-type ThyA subfamily. In terms of assembly, homodimer.

Its subcellular location is the cytoplasm. It catalyses the reaction dUMP + (6R)-5,10-methylene-5,6,7,8-tetrahydrofolate = 7,8-dihydrofolate + dTMP. Its pathway is pyrimidine metabolism; dTTP biosynthesis. Functionally, catalyzes the reductive methylation of 2'-deoxyuridine-5'-monophosphate (dUMP) to 2'-deoxythymidine-5'-monophosphate (dTMP) while utilizing 5,10-methylenetetrahydrofolate (mTHF) as the methyl donor and reductant in the reaction, yielding dihydrofolate (DHF) as a by-product. This enzymatic reaction provides an intracellular de novo source of dTMP, an essential precursor for DNA biosynthesis. In Streptococcus mutans serotype c (strain ATCC 700610 / UA159), this protein is Thymidylate synthase.